Consider the following 134-residue polypeptide: Ribosome-binding factor A (134 aa).

The protein belongs to the RbfA family. As to quaternary structure, monomer. Binds 30S ribosomal subunits, but not 50S ribosomal subunits or 70S ribosomes.

The protein localises to the cytoplasm. Functionally, one of several proteins that assist in the late maturation steps of the functional core of the 30S ribosomal subunit. Associates with free 30S ribosomal subunits (but not with 30S subunits that are part of 70S ribosomes or polysomes). Required for efficient processing of 16S rRNA. May interact with the 5'-terminal helix region of 16S rRNA. The chain is Ribosome-binding factor A from Psychrobacter arcticus (strain DSM 17307 / VKM B-2377 / 273-4).